Reading from the N-terminus, the 453-residue chain is Probable L-galactonate transporter (453 aa).

The segment at Met1–Pro23 is disordered. Topologically, residues Met1–Thr42 are periplasmic. Residues Pro10–Ala20 are compositionally biased toward polar residues. Residues Ala43–Val63 form a helical membrane-spanning segment. The Cytoplasmic portion of the chain corresponds to Ala64 to Glu71. A helical membrane pass occupies residues Leu72–Ile92. The Periplasmic portion of the chain corresponds to Ala93–Arg107. Residues Leu108–His128 form a helical membrane-spanning segment. Residues Asn129–Ala174 lie on the Cytoplasmic side of the membrane. A helical transmembrane segment spans residues Ser175 to Trp195. Position 196 (Arg196) is a topological domain, periplasmic. The chain crosses the membrane as a helical span at residues Gly197–Tyr217. Topologically, residues Arg218–Met259 are cytoplasmic. A helical membrane pass occupies residues Trp260–Leu280. At Pro281 to Thr295 the chain is on the periplasmic side. A helical transmembrane segment spans residues Gly296–Val316. The Cytoplasmic portion of the chain corresponds to Thr317–Lys332. A helical transmembrane segment spans residues Ile333 to Thr353. The Periplasmic portion of the chain corresponds to Thr354–Val359. A helical membrane pass occupies residues Leu360–Ile380. Residues His381–Ser394 are Cytoplasmic-facing. The chain crosses the membrane as a helical span at residues Ile395–Val415. The Periplasmic portion of the chain corresponds to Asp416–Arg422. A helical membrane pass occupies residues Leu423–Val443. The Cytoplasmic portion of the chain corresponds to Arg444–Asp453.

The protein belongs to the major facilitator superfamily. Phthalate permease family.

The protein localises to the cell inner membrane. It carries out the reaction L-galactonate(in) + H(+)(in) = L-galactonate(out) + H(+)(out). Its function is as follows. Probably responsible for the transport of L-galactonate from the periplasm across the inner membrane. Is essential for growth on L-galactonate as the sole carbon source. The polypeptide is Probable L-galactonate transporter (lgoT) (Escherichia coli (strain K12)).